Here is a 222-residue protein sequence, read N- to C-terminus: MKAVILLSGGLDSSTVLYQAKADGCECYAISFDYQQRHLRELDSAKKIADTVGVIEHHIVSFDLRSWGGSALTDSQIDLPSDRDLEEMSQNIPITYVPARNTIFLSFALAYAEVVNASRVYIGVNALDYSGYPDCRPDYILAMQEVFRLGTRQGREGEAIAIVAPLIEMKKTEIIQLGNSLGVPWEKTWSCYAGGEKPCGICDSCKLRLTAFQELGLTDPLM.

7–17 (LSGGLDSSTVL) lines the ATP pocket. Residues cysteine 191, cysteine 199, cysteine 202, and cysteine 205 each coordinate Zn(2+).

It belongs to the QueC family. Zn(2+) serves as cofactor.

It catalyses the reaction 7-carboxy-7-deazaguanine + NH4(+) + ATP = 7-cyano-7-deazaguanine + ADP + phosphate + H2O + H(+). It participates in purine metabolism; 7-cyano-7-deazaguanine biosynthesis. Its function is as follows. Catalyzes the ATP-dependent conversion of 7-carboxy-7-deazaguanine (CDG) to 7-cyano-7-deazaguanine (preQ(0)). The chain is 7-cyano-7-deazaguanine synthase from Trichodesmium erythraeum (strain IMS101).